A 124-amino-acid chain; its full sequence is ATP synthase epsilon chain (124 aa).

Basic and acidic residues predominate over residues 99-118 (LEQAKTEGDAHAERRADVRL). The segment at 99–124 (LEQAKTEGDAHAERRADVRLRAAAGR) is disordered.

This sequence belongs to the ATPase epsilon chain family. F-type ATPases have 2 components, CF(1) - the catalytic core - and CF(0) - the membrane proton channel. CF(1) has five subunits: alpha(3), beta(3), gamma(1), delta(1), epsilon(1). CF(0) has three main subunits: a, b and c.

The protein resides in the cell membrane. In terms of biological role, produces ATP from ADP in the presence of a proton gradient across the membrane. This chain is ATP synthase epsilon chain (atpC), found in Streptomyces coelicolor (strain ATCC BAA-471 / A3(2) / M145).